A 488-amino-acid chain; its full sequence is GTPase Der (488 aa).

EngA-type G domains follow at residues 3–166 (PVVA…AEAM) and 199–372 (IKLA…DSAT). GTP is bound by residues 9–16 (GRPNVGKS), 56–60 (DTGGI), 118–121 (NKID), 205–212 (GKPNVGKS), 252–256 (DTAGV), and 317–320 (NKWD). The 85-residue stretch at 373 to 457 (RRVSTSMLTR…PIQLRFQEGD (85 aa)) folds into the KH-like domain.

It belongs to the TRAFAC class TrmE-Era-EngA-EngB-Septin-like GTPase superfamily. EngA (Der) GTPase family. As to quaternary structure, associates with the 50S ribosomal subunit.

GTPase that plays an essential role in the late steps of ribosome biogenesis. The polypeptide is GTPase Der (Shewanella sp. (strain MR-7)).